Reading from the N-terminus, the 407-residue chain is BTB/POZ and MATH domain-containing protein 1 (407 aa).

In terms of domain architecture, MATH spans 33–167 (NGFHEFKICG…ENSLLVRCRV (135 aa)). Positions 203–270 (CDVVFQVDGE…IYWDELPDMQ (68 aa)) constitute a BTB domain.

It belongs to the Tdpoz family. As to quaternary structure, homodimer or heterodimer with BPM3, BPM5 and BPM6. Interacts with CUL3A and CUL3B. Interacts with RAP2-4 and RAP2-13. Binds to MYB56 at the promoter of FLOWERING LOCUS T (FT). In terms of tissue distribution, ubiquitous.

It is found in the nucleus. It participates in protein modification; protein ubiquitination. May act as a substrate-specific adapter of an E3 ubiquitin-protein ligase complex (CUL3-RBX1-BTB) which mediates the ubiquitination and subsequent proteasomal degradation of target proteins. This Arabidopsis thaliana (Mouse-ear cress) protein is BTB/POZ and MATH domain-containing protein 1 (BPM1).